A 478-amino-acid chain; its full sequence is ATP synthase subunit beta (478 aa).

161–168 (GGAGVGKT) contacts ATP.

It belongs to the ATPase alpha/beta chains family. As to quaternary structure, F-type ATPases have 2 components, CF(1) - the catalytic core - and CF(0) - the membrane proton channel. CF(1) has five subunits: alpha(3), beta(3), gamma(1), delta(1), epsilon(1). CF(0) has four main subunits: a(1), b(1), b'(1) and c(9-12).

It localises to the cell inner membrane. The enzyme catalyses ATP + H2O + 4 H(+)(in) = ADP + phosphate + 5 H(+)(out). Its function is as follows. Produces ATP from ADP in the presence of a proton gradient across the membrane. The catalytic sites are hosted primarily by the beta subunits. This is ATP synthase subunit beta from Gloeobacter violaceus (strain ATCC 29082 / PCC 7421).